Reading from the N-terminus, the 190-residue chain is uncharacterized protein (190 aa).

This is an uncharacterized protein from Homo sapiens (Human).